Here is a 321-residue protein sequence, read N- to C-terminus: uncharacterized protein (321 aa).

Residues 280–306 form a disordered region; sequence NSDHINNENNTNSNNDDNSNNSNNNNE. Low complexity predominate over residues 286 to 306; the sequence is NENNTNSNNDDNSNNSNNNNE.

This is an uncharacterized protein from Dictyostelium discoideum (Social amoeba).